The primary structure comprises 842 residues: Elongation factor 2 (842 aa).

Residues 17–346 (TNVRNMSVIA…MIVLHLPSPV (330 aa)) enclose the tr-type G domain. GTP is bound by residues 26–33 (AHVDHGKS), 158–161 (NKVD), and 213–215 (SGL). The residue at position 509 (Lys-509) is an N6,N6,N6-trimethyllysine; by EFM3; alternate. Lys-509 bears the N6,N6-dimethyllysine; by EFM3; alternate mark. The residue at position 509 (Lys-509) is an N6-methyllysine; by EFM3; alternate. Ser-579 is modified (phosphoserine). Lys-613 is modified (N6,N6-dimethyllysine; by EFM2; alternate). At Lys-613 the chain carries N6-methyllysine; by EFM2; alternate. His-699 carries the post-translational modification Diphthamide. Residues Thr-713 and Thr-763 each carry the phosphothreonine modification. Lys-841 is covalently cross-linked (Glycyl lysine isopeptide (Lys-Gly) (interchain with G-Cter in ubiquitin)).

This sequence belongs to the TRAFAC class translation factor GTPase superfamily. Classic translation factor GTPase family. EF-G/EF-2 subfamily. As to quaternary structure, binds to 80S ribosomes. Actively translating ribosomes show mutually exclusive binding of eIF5a (HYP2 or ANB1) and EFT1/eEF2. Interacts with the 40S ribosomal subunit protein RPL9A; the interaction is direct. Interacts with the 60S ribosomal subunit proteins RPL12A; the interaction is direct. Interacts with RPS23A; the interaction is direct. Interacts with 18S rRNA; the interaction is direct. Interacts with 25S rRNA; the interaction is direct. Interacts with RPL0. Interacts with STM1; promoting ribosome inactivation. (Microbial infection) Diphthamide can be ADP-ribosylated by diphtheria toxin and by Pseudomonas exotoxin A, thus abolishing its function.

The protein resides in the cytoplasm. The catalysed reaction is GTP + H2O = GDP + phosphate + H(+). The protein operates within protein biosynthesis; polypeptide chain elongation. Inhibited by fusidic acid and sordarin, which prevent the release of eEF2 from the ribosome after the translocation step. While fusidic acid acts on all eukaryotic eEF2, sordarin specifically binds and inhibits only selected fungal eEF2. Functionally, catalyzes the GTP-dependent ribosomal translocation step during translation elongation. During this step, the ribosome changes from the pre-translocational (PRE) to the post-translocational (POST) state as the newly formed A-site-bound peptidyl-tRNA and P-site-bound deacylated tRNA move to the P and E sites, respectively. Catalyzes the coordinated movement of the two tRNA molecules, the mRNA and conformational changes in the ribosome. This Saccharomyces cerevisiae (strain ATCC 204508 / S288c) (Baker's yeast) protein is Elongation factor 2 (EFT1).